Consider the following 147-residue polypeptide: uncharacterized protein (147 aa).

Positions 1-137 (MRDNTIGSLI…LYELMTKVHK (137 aa)) constitute an HTH marR-type domain. The segment at residues 53–76 (QMELAEKVTVTQGGISRMLTRLEK) is a DNA-binding region (H-T-H motif).

This is an uncharacterized protein from Bacillus thuringiensis subsp. konkukian (strain 97-27).